Here is a 402-residue protein sequence, read N- to C-terminus: Transcription regulatory protein OpdE (402 aa).

Helical transmembrane passes span 22–42, 60–80, 86–106, 108–128, 147–167, 170–190, 220–240, 256–276, 296–316, 318–338, 348–368, and 375–395; these read VLAIAVCAFALVASEFLPVSL, GIAISGAFAVLTSLFISSVAG, TLLLGLTAAMGMSGAIVALAP, YFVYMLGRALIGIVIGGFWSM, ALVNGGNALATVVAAPLGAWL, LIGWRGAFLCLVPVALVALAW, PGVMLGMLASSLFFMGQFSLF, AHVSLVLLVIGAAGFIGTLLI, ALIALVLTVLGGWPAIVVVLL, LWGLTGTSAPVGWWAWIARVF, LFVAVVQLSIALGSTLGGLLF, and ATFFASAAMLLIAAFLTILTA.

This sequence to B.subtilis YwfA.

The protein localises to the cell membrane. Regulates the expression of oprD which encodes the imipenem-specific porin. This is Transcription regulatory protein OpdE (opdE) from Pseudomonas aeruginosa (strain ATCC 15692 / DSM 22644 / CIP 104116 / JCM 14847 / LMG 12228 / 1C / PRS 101 / PAO1).